A 300-amino-acid polypeptide reads, in one-letter code: Acetylglutamate kinase (300 aa).

Residues 68–69 (GG), Arg90, and Asn194 each bind substrate.

It belongs to the acetylglutamate kinase family. ArgB subfamily.

The protein localises to the cytoplasm. It carries out the reaction N-acetyl-L-glutamate + ATP = N-acetyl-L-glutamyl 5-phosphate + ADP. It participates in amino-acid biosynthesis; L-arginine biosynthesis; N(2)-acetyl-L-ornithine from L-glutamate: step 2/4. Functionally, catalyzes the ATP-dependent phosphorylation of N-acetyl-L-glutamate. In Methanocaldococcus jannaschii (strain ATCC 43067 / DSM 2661 / JAL-1 / JCM 10045 / NBRC 100440) (Methanococcus jannaschii), this protein is Acetylglutamate kinase.